The chain runs to 355 residues: 4-hydroxy-3-methylbut-2-en-1-yl diphosphate synthase (flavodoxin) (355 aa).

[4Fe-4S] cluster-binding residues include Cys-266, Cys-269, Cys-301, and Glu-308.

The protein belongs to the IspG family. [4Fe-4S] cluster is required as a cofactor.

The catalysed reaction is (2E)-4-hydroxy-3-methylbut-2-enyl diphosphate + oxidized [flavodoxin] + H2O + 2 H(+) = 2-C-methyl-D-erythritol 2,4-cyclic diphosphate + reduced [flavodoxin]. It functions in the pathway isoprenoid biosynthesis; isopentenyl diphosphate biosynthesis via DXP pathway; isopentenyl diphosphate from 1-deoxy-D-xylulose 5-phosphate: step 5/6. Converts 2C-methyl-D-erythritol 2,4-cyclodiphosphate (ME-2,4cPP) into 1-hydroxy-2-methyl-2-(E)-butenyl 4-diphosphate. This is 4-hydroxy-3-methylbut-2-en-1-yl diphosphate synthase (flavodoxin) from Caldanaerobacter subterraneus subsp. tengcongensis (strain DSM 15242 / JCM 11007 / NBRC 100824 / MB4) (Thermoanaerobacter tengcongensis).